The following is a 129-amino-acid chain: Small ribosomal subunit protein uS11c (129 aa).

It belongs to the universal ribosomal protein uS11 family. As to quaternary structure, part of the 30S ribosomal subunit.

The protein localises to the plastid. Its subcellular location is the chloroplast. The protein is Small ribosomal subunit protein uS11c of Rhodomonas salina (Cryptomonas salina).